We begin with the raw amino-acid sequence, 80 residues long: OMEGA-myrmeciitoxin(02)-Mg1a (80 aa).

The signal sequence occupies residues 1–30; that stretch reads MKNNYISTCIVYLMAALLLISVISIKECTA. Residues 35 to 75 form the EGF-like domain; the sequence is YGDPCSDDLKDYCIHGDCFFLKELNQPACRCYTGYYGSRCE. 3 disulfides stabilise this stretch: Cys39/Cys52, Cys47/Cys63, and Cys65/Cys74.

It belongs to the EGF domain peptide family. In terms of tissue distribution, expressed by the venom gland.

It localises to the secreted. Its function is as follows. Ant peptide with probable defensive activity which acts as a potent agonist of the mammalian epidermal growth factor receptor (EGFR) (EC(50)=6.3 nM). Mimics, both structurally and functionally, vertebrate epidermal growth factor (EGF) peptide hormones. In vivo, intraplantar injection in mice causes long-lasting (several days) hypersensitivity of the injected paw to both mechanical and thermal stimuli. Its long-lasting effect is unusual for venom toxins whose effects are usually immediate. One possible explanation is that it would reduce the duration of a nest attack, discourage future attacks, or enhance the actions of subsequent exposure to other pain-inducing venom peptides. In Myrmecia gulosa (Red bulldog ant), this protein is OMEGA-myrmeciitoxin(02)-Mg1a.